A 641-amino-acid polypeptide reads, in one-letter code: ATP-dependent zinc metalloprotease FtsH 2 (641 aa).

Topologically, residues methionine 1–tryptophan 100 are periplasmic. Residues glycine 101–phenylalanine 121 traverse the membrane as a helical segment. Over arginine 122–alanine 641 the chain is Cytoplasmic. Position 193-200 (glycine 193–threonine 200) interacts with ATP. Histidine 415 provides a ligand contact to Zn(2+). The active site involves glutamate 416. Residues histidine 419 and aspartate 491 each coordinate Zn(2+). The disordered stretch occupies residues lysine 593–alanine 641. Composition is skewed to low complexity over residues asparagine 599–asparagine 610 and glycine 630–alanine 641.

In the central section; belongs to the AAA ATPase family. It in the C-terminal section; belongs to the peptidase M41 family. In terms of assembly, homohexamer. It depends on Zn(2+) as a cofactor.

It is found in the cell inner membrane. Its function is as follows. Acts as a processive, ATP-dependent zinc metallopeptidase for both cytoplasmic and membrane proteins. Plays a role in the quality control of integral membrane proteins. This is ATP-dependent zinc metalloprotease FtsH 2 from Methylacidiphilum infernorum (isolate V4) (Methylokorus infernorum (strain V4)).